The primary structure comprises 752 residues: Phosphoribosylformylglycinamidine synthase subunit PurL (752 aa).

H58 is a catalytic residue. Positions 61 and 103 each coordinate ATP. Position 105 (E105) interacts with Mg(2+). Substrate-binding positions include 106-109 (SHNH) and R128. The active-site Proton acceptor is the H107. Residue D129 coordinates Mg(2+). Q253 is a substrate binding site. Residue D281 participates in Mg(2+) binding. Residue 325-327 (ESQ) participates in substrate binding. ATP is bound by residues D513 and G550. N551 provides a ligand contact to Mg(2+). S553 serves as a coordination point for substrate.

The protein belongs to the FGAMS family. In terms of assembly, monomer. Part of the FGAM synthase complex composed of 1 PurL, 1 PurQ and 2 PurS subunits.

Its subcellular location is the cytoplasm. It carries out the reaction N(2)-formyl-N(1)-(5-phospho-beta-D-ribosyl)glycinamide + L-glutamine + ATP + H2O = 2-formamido-N(1)-(5-O-phospho-beta-D-ribosyl)acetamidine + L-glutamate + ADP + phosphate + H(+). Its pathway is purine metabolism; IMP biosynthesis via de novo pathway; 5-amino-1-(5-phospho-D-ribosyl)imidazole from N(2)-formyl-N(1)-(5-phospho-D-ribosyl)glycinamide: step 1/2. Functionally, part of the phosphoribosylformylglycinamidine synthase complex involved in the purines biosynthetic pathway. Catalyzes the ATP-dependent conversion of formylglycinamide ribonucleotide (FGAR) and glutamine to yield formylglycinamidine ribonucleotide (FGAM) and glutamate. The FGAM synthase complex is composed of three subunits. PurQ produces an ammonia molecule by converting glutamine to glutamate. PurL transfers the ammonia molecule to FGAR to form FGAM in an ATP-dependent manner. PurS interacts with PurQ and PurL and is thought to assist in the transfer of the ammonia molecule from PurQ to PurL. The sequence is that of Phosphoribosylformylglycinamidine synthase subunit PurL from Streptomyces coelicolor (strain ATCC BAA-471 / A3(2) / M145).